The primary structure comprises 465 residues: Argininosuccinate lyase (465 aa).

Belongs to the lyase 1 family. Argininosuccinate lyase subfamily.

The protein resides in the cytoplasm. The enzyme catalyses 2-(N(omega)-L-arginino)succinate = fumarate + L-arginine. Its pathway is amino-acid biosynthesis; L-arginine biosynthesis; L-arginine from L-ornithine and carbamoyl phosphate: step 3/3. In Rhodopseudomonas palustris (strain ATCC BAA-98 / CGA009), this protein is Argininosuccinate lyase.